Consider the following 687-residue polypeptide: Probable ATP-dependent RNA helicase Dbp73D (687 aa).

2 disordered regions span residues 1 to 26 and 52 to 87; these read MELFTVNRYTEDLKEQKDGAQGTNNE and TPILEKETSDVKESESKEEQVEEPEKPLEVVQEEDV. Composition is skewed to basic and acidic residues over residues 9–18 and 54–79; these read YTEDLKEQKD and ILEKETSDVKESESKEEQVEEPEKPL. Positions 160–168 match the Q motif motif; the sequence is LFPVQKQVI. Positions 177–381 constitute a Helicase ATP-binding domain; the sequence is KPPPFRPRDI…DLRLFQPRLF (205 aa). 190–197 is a binding site for ATP; sequence APTGSGKT. The DEAD box motif lies at 305–308; that stretch reads DEAD. The Helicase C-terminal domain occupies 434–583; the sequence is TVFALVEKYK…EIHVSPDIEI (150 aa). The interval 646–675 is disordered; that stretch reads IVQSSKKSSETKNSKTKADKTKYQPKETKK. Residues 652–675 are compositionally biased toward basic and acidic residues; the sequence is KSSETKNSKTKADKTKYQPKETKK.

This sequence belongs to the DEAD box helicase family. DDX51/DBP6 subfamily. In terms of tissue distribution, expressed in the germline tissue of the ovary.

The protein resides in the nucleus. Its subcellular location is the nucleolus. The catalysed reaction is ATP + H2O = ADP + phosphate + H(+). Its function is as follows. ATP-binding RNA helicase involved in the biogenesis of 60S ribosomal subunits. This is Probable ATP-dependent RNA helicase Dbp73D (Dbp73D) from Drosophila melanogaster (Fruit fly).